We begin with the raw amino-acid sequence, 398 residues long: Na(+)/H(+) antiporter NhaA (398 aa).

A run of 12 helical transmembrane segments spans residues 8–28 (FLQL…LALI), 59–79 (LLLW…GMEI), 96–116 (LPVI…SFII), 124–144 (AGWA…LSLL), 154–174 (VFLL…IALF), 177–197 (AELH…LLML), 202–222 (VMLL…VLKS), 223–243 (GVHA…IRGA), 261–281 (YFIL…GLSW), 292–312 (IIVG…WLAV), 328–348 (LFGL…IGGL), and 362–382 (LGIL…LRNA).

It belongs to the NhaA Na(+)/H(+) (TC 2.A.33) antiporter family.

Its subcellular location is the cell inner membrane. The enzyme catalyses Na(+)(in) + 2 H(+)(out) = Na(+)(out) + 2 H(+)(in). In terms of biological role, na(+)/H(+) antiporter that extrudes sodium in exchange for external protons. The protein is Na(+)/H(+) antiporter NhaA of Tolumonas auensis (strain DSM 9187 / NBRC 110442 / TA 4).